The sequence spans 104 residues: Large ribosomal subunit protein uL24 (104 aa).

This sequence belongs to the universal ribosomal protein uL24 family. In terms of assembly, part of the 50S ribosomal subunit.

Its function is as follows. One of two assembly initiator proteins, it binds directly to the 5'-end of the 23S rRNA, where it nucleates assembly of the 50S subunit. Functionally, one of the proteins that surrounds the polypeptide exit tunnel on the outside of the subunit. This chain is Large ribosomal subunit protein uL24, found in Flavobacterium psychrophilum (strain ATCC 49511 / DSM 21280 / CIP 103535 / JIP02/86).